Reading from the N-terminus, the 358-residue chain is Aminomethyltransferase (358 aa).

It belongs to the GcvT family. The glycine cleavage system is composed of four proteins: P, T, L and H.

The catalysed reaction is N(6)-[(R)-S(8)-aminomethyldihydrolipoyl]-L-lysyl-[protein] + (6S)-5,6,7,8-tetrahydrofolate = N(6)-[(R)-dihydrolipoyl]-L-lysyl-[protein] + (6R)-5,10-methylene-5,6,7,8-tetrahydrofolate + NH4(+). In terms of biological role, the glycine cleavage system catalyzes the degradation of glycine. The sequence is that of Aminomethyltransferase from Francisella tularensis subsp. tularensis (strain WY96-3418).